A 556-amino-acid chain; its full sequence is GEFTWKLADHPKLPKGKTIAMVVLDGWGEAKPDQYNCIHVAETPTMDSFKKTAPERWRLIKAHGTAVGLPTEDDMGNSEVGHNALGAGRIYAQGAKLVDLALASGKIYEGEGFKYVKECFDKGTLHLIGLLSDGGVHSRLDQLQLLLKGAAEHGAKRIRVHVLTDGRDVIDGTSVGFAETLEKDLENLREKGVDAQVASGGGRMYVTMDRYENDWNVVKRGWDAQVLGEAPYKFKSAVEAIKKLREEPKANDQYLPPFVIVDENGKPVGPIVDGDAVVTINFRADRMVMLAKALEYENFDTFDRVRFPKIHYAGMLQYDGELKLPSHYLVSPPEIERTSGEYLVHNGVHTFACSETVKFGHVTFFWNGNRSGYFNPEMEEYVEIPSDVGITFNVQPKMKAIEIAEKARDAILSGKFQQVRVNIPNGDMVGHTGDVEATVVGCKAADEAVKMIIDAIEQVGGIYVVTADHGNAEDMVKRDKSGKPMADKSGKIQILTSHTLQPVPIAIGGPGLTPGVRFRSDIPTGGLANVAATVMNLHGFEAPSDYEPTLIEAVDN.

Residues D25 and S78 each contribute to the Mn(2+) site. S78 acts as the Phosphoserine intermediate in catalysis. Substrate-binding positions include H137, 167-168, R203, R210, 283-286, and K358; these read RD and RADR. Residues D427, H431, D468, H469, and H498 each contribute to the Mn(2+) site.

This sequence belongs to the BPG-independent phosphoglycerate mutase family. In terms of assembly, monomer. It depends on Mn(2+) as a cofactor. As to expression, found ubiquitously in germinating seed.

It localises to the cytoplasm. It carries out the reaction (2R)-2-phosphoglycerate = (2R)-3-phosphoglycerate. It participates in carbohydrate degradation; glycolysis; pyruvate from D-glyceraldehyde 3-phosphate: step 3/5. In terms of biological role, catalyzes the interconversion of 2-phosphoglycerate and 3-phosphoglycerate. The chain is 2,3-bisphosphoglycerate-independent phosphoglycerate mutase from Ricinus communis (Castor bean).